The primary structure comprises 105 residues: Phosphoribosyl-ATP pyrophosphatase (105 aa).

The protein belongs to the PRA-PH family.

The protein resides in the cytoplasm. The catalysed reaction is 1-(5-phospho-beta-D-ribosyl)-ATP + H2O = 1-(5-phospho-beta-D-ribosyl)-5'-AMP + diphosphate + H(+). The protein operates within amino-acid biosynthesis; L-histidine biosynthesis; L-histidine from 5-phospho-alpha-D-ribose 1-diphosphate: step 2/9. The polypeptide is Phosphoribosyl-ATP pyrophosphatase (Roseobacter denitrificans (strain ATCC 33942 / OCh 114) (Erythrobacter sp. (strain OCh 114))).